Reading from the N-terminus, the 529-residue chain is Bifunctional purine biosynthesis protein PurH (529 aa).

The region spanning 1–148 (MQQRRPVRRA…KNHKDVAIVV (148 aa)) is the MGS-like domain. Lys287 carries the post-translational modification N6-acetyllysine.

It belongs to the PurH family.

It carries out the reaction (6R)-10-formyltetrahydrofolate + 5-amino-1-(5-phospho-beta-D-ribosyl)imidazole-4-carboxamide = 5-formamido-1-(5-phospho-D-ribosyl)imidazole-4-carboxamide + (6S)-5,6,7,8-tetrahydrofolate. The enzyme catalyses IMP + H2O = 5-formamido-1-(5-phospho-D-ribosyl)imidazole-4-carboxamide. Its pathway is purine metabolism; IMP biosynthesis via de novo pathway; 5-formamido-1-(5-phospho-D-ribosyl)imidazole-4-carboxamide from 5-amino-1-(5-phospho-D-ribosyl)imidazole-4-carboxamide (10-formyl THF route): step 1/1. It participates in purine metabolism; IMP biosynthesis via de novo pathway; IMP from 5-formamido-1-(5-phospho-D-ribosyl)imidazole-4-carboxamide: step 1/1. The polypeptide is Bifunctional purine biosynthesis protein PurH (Escherichia coli (strain SMS-3-5 / SECEC)).